We begin with the raw amino-acid sequence, 380 residues long: MKWLVLLGLVAFSECIFKIPLRRVKTMRKTLSGKNMLNDVLKEHPYRLPQISFRGSNLIIHPLRNIRDTFYVGNITIGTPPQEFQVLFDTGSSVLWVPSVLCNSSTCSIHVRFRHLQSSTFRTTNKTFWITYGAGTMKGVVAHDTVRIGDLVSIDQPFGLSMAEYGFHGRRFDGVLGLNYPRQSCCRPTPIFDKLKNQGAISEPVFAFYLSKDEQEGSVVMFGGVDHRYYKGELNWVPLVKADDWTIQVDRISMRREVIACSDGCDALLDTGASFIHGPGRLIDDIQKLIGSEPRDLKHYISCSAVNTLPSIIFTINGINYPVPAQAYILKGSTGHCYTAFRAKRVRTSTESWVLGDVFLRLYFSVFDRGNDRIGLAPAM.

A signal peptide spans 1–15 (MKWLVLLGLVAFSEC). Positions 16–53 (IFKIPLRRVKTMRKTLSGKNMLNDVLKEHPYRLPQISF) are cleaved as a propeptide — activation peptide. One can recognise a Peptidase A1 domain in the interval 71-377 (YVGNITIGTP…DRGNDRIGLA (307 aa)). Asn74 carries N-linked (GlcNAc...) asparagine glycosylation. Asp89 is a catalytic residue. Cys102 and Cys107 are disulfide-bonded. A glycan (N-linked (GlcNAc...) asparagine) is linked at Asn125. Cys261 and Cys265 form a disulfide bridge. Asp270 is a catalytic residue. Cys303 and Cys337 are joined by a disulfide.

It belongs to the peptidase A1 family. As to expression, trophoblast and placental tissue. Produced specifically in the invasive binucleate cells of the placenta.

The protein localises to the secreted. Its subcellular location is the extracellular space. The sequence is that of Pregnancy-associated glycoprotein 4 from Ovis aries (Sheep).